The primary structure comprises 351 residues: Protein MGF 360-12L (351 aa).

The stretch at 57 to 89 is one ANK repeat; the sequence is DLNMALVKAVKENNYSLIKLFTEWGANINYGLI.

Belongs to the asfivirus MGF 360 family.

Its function is as follows. Plays a role in virus cell tropism, and may be required for efficient virus replication in macrophages. The sequence is that of Protein MGF 360-12L from Ornithodoros (relapsing fever ticks).